The following is a 289-amino-acid chain: Zinc finger matrin-type protein 3 (289 aa).

Residues 1 to 59 (MILLQHAGLPPPKRPSSSPPMSVAARSTGALQLPPQKPFGQEASLPLAGEEEPPKGGEQ) form a disordered region. Over residues 9-18 (LPPPKRPSSS) the composition is skewed to pro residues. 2 Matrin-type zinc fingers span residues 70–100 (LYCK…KLRN) and 147–177 (DYCK…RLRL). Residues 180-191 (AQSNSFSDSSEV) are compositionally biased toward polar residues. Residues 180–200 (AQSNSFSDSSEVGQRRTRKEG) are disordered. Residues 246-276 (FYCSMCNVGAGEEVEFRQHLESKQHKSKVSE) form a Matrin-type 3 zinc finger.

Interacts with dsRNA.

It is found in the nucleus. The protein resides in the nucleolus. Acts as a bona fide target gene of p53/TP53. May play a role in the TP53-dependent growth regulatory pathway. May contribute to TP53-mediated apoptosis by regulation of TP53 expression and translocation to the nucleus and nucleolus. The sequence is that of Zinc finger matrin-type protein 3 from Bos taurus (Bovine).